Here is a 154-residue protein sequence, read N- to C-terminus: Large ribosomal subunit protein uL22 (154 aa).

Belongs to the universal ribosomal protein uL22 family. As to quaternary structure, part of the 50S ribosomal subunit.

Functionally, this protein binds specifically to 23S rRNA. It makes multiple contacts with different domains of the 23S rRNA in the assembled 50S subunit and ribosome. Its function is as follows. The globular domain of the protein is located near the polypeptide exit tunnel on the outside of the subunit, while an extended beta-hairpin is found that lines the wall of the exit tunnel in the center of the 70S ribosome. The chain is Large ribosomal subunit protein uL22 from Methanosphaera stadtmanae (strain ATCC 43021 / DSM 3091 / JCM 11832 / MCB-3).